The sequence spans 603 residues: Protein SHORT-ROOT 2 (603 aa).

Disordered stretches follow at residues 11-58 and 106-140; these read HHHH…HSHS and DFSS…SSAG. Residues 31-44 are compositionally biased toward low complexity; it reads SYPSSRGSTSSPSS. Basic residues predominate over residues 45–58; that stretch reads HHTHNHTYYHHSHS. Residues 108 to 125 show a composition bias toward low complexity; it reads SSSSSSRQFHSGTGAPSS. Positions 179–602 constitute a GRAS domain; sequence AAPSSSGRWA…QPVVWASAWK (424 aa). Positions 186-249 are leucine repeat I (LRI); that stretch reads RWAAQLLMEC…LTTSGPRTLR (64 aa). The VHIID stretch occupies residues 268–354; it reads ALKFQELSPW…DTPHLSITTV (87 aa). Residues 318–322 carry the VHIID motif; it reads LHILD. Positions 370 to 406 are leucine repeat II (LRII); that stretch reads EIGQRLEKFARLMGVPFSFRAVHHAGDLADLDLAALD. The PFYRE stretch occupies residues 416–514; that stretch reads LAVNCVNALR…ERAVGRAIVD (99 aa). The interval 517–602 is SAW; that stretch reads SCPASQSAER…QPVVWASAWK (86 aa).

The protein belongs to the GRAS family. In terms of assembly, does not interact with SCR1.

It is found in the nucleus. In terms of biological role, putative transcription factor involved in asymmetric cell division. In Oryza sativa subsp. indica (Rice), this protein is Protein SHORT-ROOT 2 (SHR2).